The following is a 430-amino-acid chain: Protein trichome birefringence-like 24 (430 aa).

Residues V15–I35 form a helical; Signal-anchor for type II membrane protein membrane-spanning segment. The short motif at G153–S155 is the GDS motif element. The DCXHWCLPGXXDXWN motif signature appears at D406 to N420.

The protein belongs to the PC-esterase family. TBL subfamily.

Its subcellular location is the membrane. In terms of biological role, may act as a bridging protein that binds pectin and other cell wall polysaccharides. Probably involved in maintaining esterification of pectins. May be involved in the specific O-acetylation of cell wall polymers. The sequence is that of Protein trichome birefringence-like 24 (TBL24) from Arabidopsis thaliana (Mouse-ear cress).